The primary structure comprises 504 residues: Maturase K (504 aa).

The protein belongs to the intron maturase 2 family. MatK subfamily.

It is found in the plastid. The protein localises to the chloroplast. Its function is as follows. Usually encoded in the trnK tRNA gene intron. Probably assists in splicing its own and other chloroplast group II introns. The sequence is that of Maturase K from Berzelia lanuginosa (Buttonbush).